A 289-amino-acid chain; its full sequence is Cuticle collagen 19 (289 aa).

The first 18 residues, 1–18 (MGKLIVVGSCGVLVCVLA), serve as a signal peptide directing secretion. The segment at 95–289 (SEGCPAGPPG…PCPSRAAYKA (195 aa)) is disordered. 2 triple-helical region regions span residues 101–130 (GPPGPPGEGGQKGNPGHDGDDGKPGAPGVI) and 147–269 (GRPG…KGED). Positions 162-183 (GPAGGNGRRGPPGPVGGPGEQG) are enriched in gly residues. Composition is skewed to low complexity over residues 184-207 (PQGDAGRPGAAGRPGPAGPRGEPG) and 223-239 (PRGETGPAGNPGAPGND).

Belongs to the cuticular collagen family. As to quaternary structure, collagen polypeptide chains are complexed within the cuticle by disulfide bonds and other types of covalent cross-links.

Functionally, nematode cuticles are composed largely of collagen-like proteins. The cuticle functions both as an exoskeleton and as a barrier to protect the worm from its environment. The chain is Cuticle collagen 19 (col-19) from Caenorhabditis elegans.